The chain runs to 168 residues: MRAVMGININATARSLLLSEFVSAFFLAMRYFFQPKPTLNYPFEKGPISPRFRGEHALRRYPNGEERCIACKLCEAVCPAQAITIEAGPRRNDGTRRTVRYDIDMVKCIYCGLCQEACPVDAIVEGPNFEFATETREELFYDKAKLLANGDRWEREIAKAIELDAPYR.

4Fe-4S ferredoxin-type domains lie at 58–88 and 99–128; these read LRRY…IEAG and VRYD…EGPN. [4Fe-4S] cluster is bound by residues cysteine 68, cysteine 71, cysteine 74, cysteine 78, cysteine 108, cysteine 111, cysteine 114, and cysteine 118.

The protein belongs to the complex I 23 kDa subunit family. As to quaternary structure, NDH-1 is composed of 14 different subunits. Subunits NuoA, H, J, K, L, M, N constitute the membrane sector of the complex. Requires [4Fe-4S] cluster as cofactor.

It is found in the cell inner membrane. The enzyme catalyses a quinone + NADH + 5 H(+)(in) = a quinol + NAD(+) + 4 H(+)(out). Functionally, NDH-1 shuttles electrons from NADH, via FMN and iron-sulfur (Fe-S) centers, to quinones in the respiratory chain. The immediate electron acceptor for the enzyme in this species is believed to be ubiquinone. Couples the redox reaction to proton translocation (for every two electrons transferred, four hydrogen ions are translocated across the cytoplasmic membrane), and thus conserves the redox energy in a proton gradient. In Bradyrhizobium diazoefficiens (strain JCM 10833 / BCRC 13528 / IAM 13628 / NBRC 14792 / USDA 110), this protein is NADH-quinone oxidoreductase subunit I.